We begin with the raw amino-acid sequence, 586 residues long: Serine/threonine-protein phosphatase 2A 56 kDa regulatory subunit delta isoform (586 aa).

A disordered region spans residues M1–K80. Tandem repeats lie at residues Q21–P22, Q23–P24, Q25–P26, Q27–P28, Q29–P30, and Q31–P32. Positions Q21–P36 are 8 X 2 AA approximate tandem repeats of Q-P. Pro residues predominate over residues Q23–Q35. A 7; approximate repeat occupies Q33–S34. Repeat 8 spans residues Q35–P36. Low complexity predominate over residues P36–N45. Position 47 is a phosphothreonine (T47). 3 positions are modified to phosphoserine: S72, S73, and S74. Residues R507–P514 carry the SH3-binding; class I motif. The Nuclear localization signal motif lies at K532–E549. A phosphoserine mark is found at S557 and S582.

Belongs to the phosphatase 2A regulatory subunit B56 family. As to quaternary structure, PP2A consists of a common heterodimeric core enzyme, composed of a 36 kDa catalytic subunit (subunit C) and a 65 kDa constant regulatory subunit (PR65 or subunit A), that associates with a variety of regulatory subunits. Proteins that associate with the core dimer include three families of regulatory subunits B (the R2/B/PR55/B55, R3/B''/PR72/PR130/PR59 and R5/B'/B56 families), the 48 kDa variable regulatory subunit, viral proteins, and cell signaling molecules. Interacts with the PP2A A subunit PPP2R1A. Interacts with SGO1. Interacts with ADCY8. As to expression, highly expressed in brain.

The protein resides in the nucleus. The B regulatory subunit might modulate substrate selectivity and catalytic activity, and might also direct the localization of the catalytic enzyme to a particular subcellular compartment. The chain is Serine/threonine-protein phosphatase 2A 56 kDa regulatory subunit delta isoform (PPP2R5D) from Oryctolagus cuniculus (Rabbit).